We begin with the raw amino-acid sequence, 117 residues long: Ribonuclease P protein component (117 aa).

It belongs to the RnpA family. As to quaternary structure, consists of a catalytic RNA component (M1 or rnpB) and a protein subunit.

The enzyme catalyses Endonucleolytic cleavage of RNA, removing 5'-extranucleotides from tRNA precursor.. In terms of biological role, RNaseP catalyzes the removal of the 5'-leader sequence from pre-tRNA to produce the mature 5'-terminus. It can also cleave other RNA substrates such as 4.5S RNA. The protein component plays an auxiliary but essential role in vivo by binding to the 5'-leader sequence and broadening the substrate specificity of the ribozyme. This is Ribonuclease P protein component from Thermotoga petrophila (strain ATCC BAA-488 / DSM 13995 / JCM 10881 / RKU-1).